Here is a 431-residue protein sequence, read N- to C-terminus: Methionine aminopeptidase 2-2 (431 aa).

Residues Met1–Phe76 are disordered. The span at Glu35–Asp47 shows a compositional bias: acidic residues. His184 is a binding site for substrate. Residues Asp204, Asp215, and His284 each contribute to the a divalent metal cation site. Residue His292 participates in substrate binding. A divalent metal cation-binding residues include Glu317 and Glu412.

It belongs to the peptidase M24A family. Methionine aminopeptidase eukaryotic type 2 subfamily. The cofactor is Co(2+). It depends on Zn(2+) as a cofactor. Requires Mn(2+) as cofactor. Fe(2+) is required as a cofactor.

The protein localises to the cytoplasm. The catalysed reaction is Release of N-terminal amino acids, preferentially methionine, from peptides and arylamides.. In terms of biological role, cotranslationally removes the N-terminal methionine from nascent proteins. The N-terminal methionine is often cleaved when the second residue in the primary sequence is small and uncharged (Met-Ala-, Cys, Gly, Pro, Ser, Thr, or Val). The sequence is that of Methionine aminopeptidase 2-2 from Aspergillus niger (strain ATCC MYA-4892 / CBS 513.88 / FGSC A1513).